The chain runs to 153 residues: uncharacterized protein (153 aa).

Positions 1–18 are cleaved as a signal peptide; that stretch reads MSARISKQLRLSVPPCLA. Residues asparagine 19 and asparagine 25 are each glycosylated (N-linked (GlcNAc...) asparagine). Topologically, residues 19-43 are extracellular; it reads NRTTASNSSSCVTEVEPLLQSFSST. Residues 44–64 traverse the membrane as a helical segment; the sequence is LVLIVLATVIFCLVVLSLSTF. Residues 65–153 lie on the Cytoplasmic side of the membrane; it reads HMHKSKMKKR…EHLQQSVVLS (89 aa). Positions 75-115 are disordered; it reads KIEKAQEEYERDHCSPKAERGHLHGMGRGGTHGSPTSPTIQ. Residues 77–96 are compositionally biased toward basic and acidic residues; that stretch reads EKAQEEYERDHCSPKAERGH.

The protein localises to the membrane. This is an uncharacterized protein from Xenopus tropicalis (Western clawed frog).